We begin with the raw amino-acid sequence, 273 residues long: Transmembrane protein 202 (273 aa).

The next 4 membrane-spanning stretches (helical) occupy residues 53–75 (HIYI…IAMS), 121–141 (FFLI…SSWI), 155–175 (VSML…LFVA), and 189–209 (LLWT…AGII). A disordered region spans residues 242-273 (TTVSPAKDEGPRSEMESLSVREKNLPKSGLWW). The segment covering 247–266 (AKDEGPRSEMESLSVREKNL) has biased composition (basic and acidic residues).

It localises to the membrane. This is Transmembrane protein 202 (TMEM202) from Homo sapiens (Human).